We begin with the raw amino-acid sequence, 189 residues long: Threonylcarbamoyl-AMP synthase (189 aa).

One can recognise a YrdC-like domain in the interval 9-189 (ASAQRKLSVY…IDGETGKRLR (181 aa)).

Belongs to the SUA5 family. TsaC subfamily.

Its subcellular location is the cytoplasm. It carries out the reaction L-threonine + hydrogencarbonate + ATP = L-threonylcarbamoyladenylate + diphosphate + H2O. Functionally, required for the formation of a threonylcarbamoyl group on adenosine at position 37 (t(6)A37) in tRNAs that read codons beginning with adenine. Catalyzes the conversion of L-threonine, HCO(3)(-)/CO(2) and ATP to give threonylcarbamoyl-AMP (TC-AMP) as the acyladenylate intermediate, with the release of diphosphate. The polypeptide is Threonylcarbamoyl-AMP synthase (Neisseria gonorrhoeae (strain ATCC 700825 / FA 1090)).